Consider the following 517-residue polypeptide: 2,3-bisphosphoglycerate-independent phosphoglycerate mutase 1 (517 aa).

Residues D17 and S67 each contribute to the Mn(2+) site. The Phosphoserine intermediate role is filled by S67. Substrate-binding positions include H128, 158 to 159 (RD), R190, R196, 267 to 270 (RPDR), and K340. 5 residues coordinate Mn(2+): D407, H411, D448, H449, and H467.

It belongs to the BPG-independent phosphoglycerate mutase family. Mn(2+) serves as cofactor.

It carries out the reaction (2R)-2-phosphoglycerate = (2R)-3-phosphoglycerate. It functions in the pathway carbohydrate degradation; glycolysis; pyruvate from D-glyceraldehyde 3-phosphate: step 3/5. Functionally, catalyzes the interconversion of 2-phosphoglycerate and 3-phosphoglycerate. The chain is 2,3-bisphosphoglycerate-independent phosphoglycerate mutase 1 from Methanosarcina barkeri (strain Fusaro / DSM 804).